A 274-amino-acid polypeptide reads, in one-letter code: Cytochrome b-c1 complex subunit Rieske, mitochondrial (274 aa).

Over 79 to 103 (SHTDIKVPDFSDYRRSEVLDTTKSS) the chain is Mitochondrial matrix. The helical transmembrane segment at 104 to 140 (RESSDARKGFSYLVTATTAVGVTYAAKSIVTQFVSSM) threads the bilayer. The Mitochondrial intermembrane segment spans residues 141 to 274 (SASADVLAMS…FTSDDLVIVG (134 aa)). Positions 187–272 (EAAVELSQLR…YEFTSDDLVI (86 aa)) constitute a Rieske domain. [2Fe-2S] cluster contacts are provided by Cys-217, His-219, Cys-236, His-239, and Ser-241. Residues Cys-222 and Cys-238 are joined by a disulfide bond.

It belongs to the Rieske iron-sulfur protein family. As to quaternary structure, component of the ubiquinol-cytochrome c oxidoreductase (cytochrome b-c1 complex, complex III, CIII), a multisubunit enzyme composed of 11 subunits. The complex is composed of 3 respiratory subunits cytochrome b, cytochrome c1 and Rieske protein UQCRFS1, 2 core protein subunits UQCRC1/QCR1 and UQCRC2/QCR2, and 6 low-molecular weight protein subunits UQCRH/QCR6, UQCRB/QCR7, UQCRQ/QCR8, UQCR10/QCR9, UQCR11/QCR10 and subunit 9, the cleavage product of Rieske protein UQCRFS1. The complex exists as an obligatory dimer and forms supercomplexes (SCs) in the inner mitochondrial membrane with NADH-ubiquinone oxidoreductase (complex I, CI) and cytochrome c oxidase (complex IV, CIV), resulting in different assemblies (supercomplex SCI(1)III(2)IV(1) and megacomplex MCI(2)III(2)IV(2)). Incorporation of the Rieske protein UQCRFS1 is the penultimate step in complex III assembly. Interacts with TTC19, which is involved in the clearance of UQCRFS1 fragments. In terms of assembly, component of the ubiquinol-cytochrome c oxidoreductase (cytochrome b-c1 complex, complex III, CIII). Subunit 9 corresponds to the mitochondrial targeting sequence (MTS) of Rieske protein UQCRFS1. It is retained after processing and incorporated inside complex III, where it remains bound to the complex and localizes between the 2 core subunits UQCRC1/QCR1 and UQCRC2/QCR2. The cofactor is [2Fe-2S] cluster. Post-translationally, proteolytic processing is necessary for the correct insertion of UQCRFS1 in the complex III dimer. Several fragments are generated during UQCRFS1 insertion, most probably due to the endogenous matrix-processing peptidase (MPP) activity of the 2 core protein subunits UQCRC1/QCR1 and UQCRC2/QCR2, which are homologous to the 2 mitochondrial-processing peptidase (MPP) subunits beta-MPP and alpha-MPP respectively. The action of the protease is also necessary for the clearance of the UQCRFS1 fragments.

It is found in the mitochondrion inner membrane. It carries out the reaction a quinol + 2 Fe(III)-[cytochrome c](out) = a quinone + 2 Fe(II)-[cytochrome c](out) + 2 H(+)(out). Component of the ubiquinol-cytochrome c oxidoreductase, a multisubunit transmembrane complex that is part of the mitochondrial electron transport chain which drives oxidative phosphorylation. The respiratory chain contains 3 multisubunit complexes succinate dehydrogenase (complex II, CII), ubiquinol-cytochrome c oxidoreductase (cytochrome b-c1 complex, complex III, CIII) and cytochrome c oxidase (complex IV, CIV), that cooperate to transfer electrons derived from NADH and succinate to molecular oxygen, creating an electrochemical gradient over the inner membrane that drives transmembrane transport and the ATP synthase. The cytochrome b-c1 complex catalyzes electron transfer from ubiquinol to cytochrome c, linking this redox reaction to translocation of protons across the mitochondrial inner membrane, with protons being carried across the membrane as hydrogens on the quinol. In the process called Q cycle, 2 protons are consumed from the matrix, 4 protons are released into the intermembrane space and 2 electrons are passed to cytochrome c. The Rieske protein is a catalytic core subunit containing a [2Fe-2S] iron-sulfur cluster. It cycles between 2 conformational states during catalysis to transfer electrons from the quinol bound in the Q(0) site in cytochrome b to cytochrome c1. Incorporation of UQCRFS1 is the penultimate step in complex III assembly. Functionally, component of the ubiquinol-cytochrome c oxidoreductase (cytochrome b-c1 complex, complex III, CIII). UQCRFS1 undergoes proteolytic processing once it is incorporated in the complex III dimer. One of the fragments, called subunit 9, corresponds to its mitochondrial targeting sequence (MTS). The proteolytic processing is necessary for the correct insertion of UQCRFS1 in the complex III dimer, but the persistence of UQCRFS1-derived fragments may prevent newly imported UQCRFS1 to be processed and assembled into complex III and is detrimental for the complex III structure and function. This Aotus azarae (Azara's night monkey) protein is Cytochrome b-c1 complex subunit Rieske, mitochondrial (UQCRFS1).